Reading from the N-terminus, the 109-residue chain is Parvalbumin, thymic (109 aa).

Residue Ala2 is modified to N-acetylalanine. 2 consecutive EF-hand domains span residues 39-74 and 78-109; these read KTPD…FSSS and LTSA…LVKA. Asp52, Asp54, Ser56, Glu63, Asp91, Asp93, Asp95, Lys97, and Glu102 together coordinate Ca(2+).

The protein belongs to the parvalbumin family.

Functionally, appears to promote immune maturation in bone marrow cells in culture. Binds two calcium ions. This chain is Parvalbumin, thymic, found in Gallus gallus (Chicken).